Consider the following 322-residue polypeptide: FAD-dependent monooxygenase subE (322 aa).

Glutamate 35, glycine 49, arginine 108, and aspartate 313 together coordinate FAD.

It belongs to the paxM FAD-dependent monooxygenase family. Requires FAD as cofactor.

The protein operates within secondary metabolite biosynthesis; terpenoid biosynthesis. Its function is as follows. FAD-dependent monooxygenase; part of the gene cluster that mediates the biosynthesis of the immunosuppressants subglutinols, meroterpenoids consisting of an alpha-pyrone (4-hydroxy-5,6-dimethyl-2-pyrone) moiety attached to a decalin core fused to a five-membered cyclic ether carrying a prenylside chain. The first step of the pathway is the synthesis of the alpha-pyrone moiety by the polyketide synthase subA via condensation of one acetyl-CoA starter unit with 3 malonyl-CoA units and 2 methylations. The alpha-pyrone is then combined with geranylgeranyl pyrophosphate (GGPP) formed by the GGPP synthase subD through the action of the prenyltransferase subC to yield a linear alpha-pyrone diterpenoid. Subsequent steps in the subglutinol biosynthetic pathway involve the decalin core formation, which is thought to be initiated by the epoxidation of the C10-C11 olefin by the FAD-dependent oxidoreductase subE. The following cyclization cascade would be catalyzed by the terpene cyclase subB. Lastly, the FAD-dependent dehydrogenase subF probably catalyzes the five-membered cyclic ether formation to complete the formation of subglutinol A. Subsequent redox reactions appear to give rise to subglutinol C and D, however, it remains unclear which enzymes are responsible for these transformations. SubD may have secondary function in the conversion of the identified subglutinols to subglutinol analog 45, which seems to be the major product of the cluster. This Metarhizium robertsii (strain ARSEF 23 / ATCC MYA-3075) (Metarhizium anisopliae (strain ARSEF 23)) protein is FAD-dependent monooxygenase subE.